The primary structure comprises 505 residues: RNA-splicing ligase RtcB homolog (505 aa).

The Mn(2+) site is built by D119, C122, H227, H259, and H353. Position 226-230 (226-230 (NHYGE)) interacts with GMP. Residues 353–354 (HN), 402–405 (GGTM), S409, 428–431 (HGAG), and K504 each bind GMP. H428 functions as the GMP-histidine intermediate in the catalytic mechanism.

The protein belongs to the RtcB family. Catalytic component of the tRNA-splicing ligase complex. Mn(2+) serves as cofactor.

It catalyses the reaction a 3'-end 3'-phospho-ribonucleotide-RNA + a 5'-end dephospho-ribonucleoside-RNA + GTP = a ribonucleotidyl-ribonucleotide-RNA + GMP + diphosphate. The enzyme catalyses a 3'-end 2',3'-cyclophospho-ribonucleotide-RNA + a 5'-end dephospho-ribonucleoside-RNA + GTP + H2O = a ribonucleotidyl-ribonucleotide-RNA + GMP + diphosphate + H(+). Its function is as follows. Catalytic subunit of the tRNA-splicing ligase complex that acts by directly joining spliced tRNA halves to mature-sized tRNAs by incorporating the precursor-derived splice junction phosphate into the mature tRNA as a canonical 3',5'-phosphodiester. May act as an RNA ligase with broad substrate specificity, and may function toward other RNAs. This Brugia malayi (Filarial nematode worm) protein is RNA-splicing ligase RtcB homolog.